The chain runs to 1798 residues: DNA polymerase II large subunit (1798 aa).

The segment at 286–309 is disordered; that stretch reads EKGKSSEENKDESKAEDTGTESVA. The DOD-type homing endonuclease domain maps to 1184–1319; the sequence is VVGYYLAEGY…ETLLLAKFGI (136 aa). The segment at 1699–1798 is disordered; it reads TGHSNGKNGY…GISLDEFFGS (100 aa). Residues 1714–1731 show a composition bias toward low complexity; the sequence is GKNGKASKKSGSLASKLS. Basic and acidic residues predominate over residues 1733–1753; sequence KGKEPSKKKESAKPKRSEKVK.

The protein belongs to the archaeal DNA polymerase II family. Heterodimer of a large subunit and a small subunit. This protein undergoes a protein self splicing that involves a post-translational excision of the intervening region (intein) followed by peptide ligation.

The enzyme catalyses DNA(n) + a 2'-deoxyribonucleoside 5'-triphosphate = DNA(n+1) + diphosphate. It carries out the reaction Exonucleolytic cleavage in the 3'- to 5'-direction to yield nucleoside 5'-phosphates.. Its function is as follows. Possesses two activities: a DNA synthesis (polymerase) and an exonucleolytic activity that degrades single-stranded DNA in the 3'- to 5'-direction. Has a template-primer preference which is characteristic of a replicative DNA polymerase. This Thermococcus kodakarensis (strain ATCC BAA-918 / JCM 12380 / KOD1) (Pyrococcus kodakaraensis (strain KOD1)) protein is DNA polymerase II large subunit (polC).